A 1368-amino-acid chain; its full sequence is MAYSFTEKKRIRKSFAKRATVHQVPFLLATQIQSYAQFLQENAPVAQRKSEGLQAAFNAIFPIVSHNGLARMEFVSYHLSNPPFDVKECQQRGLTFHSALRAKVRLIINDRENPTKVKEIKEQEVYMGEIPLMTSTGSFVINGTERVIVSQLHRSPGVFFEHDKGKTHSSGKLLFSARIIPYRGSWLDFEFDPKDILYFRVDRRRKMPVTILLKSIGLTPEQILAHFFVFDNFTLKTEGALMEFVPERLRGEVARFDISDKNGKVVVEKDKRINAKHIRDLDSAGTKLISVPEDYLLGRVLAKNIVDPDTGEVLANANDELTEGVLEKLRDAGVKEIQTLYTNDLDQGPYMSATLRTDDTADQTAARIAIYRMMRPGEPPTEDAVEALFQRLFYSEDSYDLSRVGRMKVNSRLNRSSGTGPMVLTDEDILDTIKLLVNLRNGKGEVDDIDHLGNRRVRCVGELAENQFRAGLSRVERAVKERLGQAETENLMPHDLINSKPISSAIREFFGSSQLSQFMDQTNPLSEVTHKRRISALGPGGLTRERAGFEVRDVHPTHYGRVCPIETPEGPNIGLINSLALYAQLNDYGFLETPYRKVENGKLTDQVDYLSAIEEGKYVVAQANATLDKDGNLIDELVSAREGSERETRMVTPDRVQYIDVAPSQIVSAAASLVPFLEHDDANRALMGANMQRQAVPCLRADKPLVGTGVERTVAVDSGTAVQATRGGVVDYVDANRVVIRVNDAEAVAGEVGVDIYNLIKYTRSNQNTNINQRPMVKVGDVVARGDVIADGASTDMGELALGQNMLVAFMPWNGYNFEDSILISERVVAEDRYTSIHIEELSVVARDTKLGPEEITRDISNLAEAQLARLDESGITYIGAEVEAGDVMVGKVTPKGETQLTPEEKLLRAIFGEKASDVKDTSLRVPSGMSGTVIDVQVFTREGVVRDKRAQSIIDEELKRYRLDLNDQLRIVEGDAFQRLERLLVGKIANGGPKKLAKGTALTKEYLADLDKWHWFDIRPAEDEVALQLEAVKVAIEQKRHDFDLAFEEKRKKLTQGDELPPGVIKMVKVYLAVKRRLQPGDKMAGRHGNKGVVSKITPIEDMPYMADGTPADIVLNPLGVPSRMNVGQILETHLGWAARGLGERIGNMLKAQAKAAEIRKLLGQIYNESGKVEDLDSLSDAEILELAENLKKGVPFATPVFDGAHEDEIRRMLDLAYPEDIAKEKGLTASKQQVTLFDGRTGEAFERPVTLGVMHMLKLHHLVDDKMHARSTGPYSLVTQQPLGGKAQFGGQRFGEMEVWALEAYGASYVLQEMLTVKSDDVNGRTKVYENIVKGEHSIDAGMPESFNVLVKEIRSLGIDIDLERN.

This sequence belongs to the RNA polymerase beta chain family. The RNAP catalytic core consists of 2 alpha, 1 beta, 1 beta' and 1 omega subunit. When a sigma factor is associated with the core the holoenzyme is formed, which can initiate transcription.

The catalysed reaction is RNA(n) + a ribonucleoside 5'-triphosphate = RNA(n+1) + diphosphate. Its function is as follows. DNA-dependent RNA polymerase catalyzes the transcription of DNA into RNA using the four ribonucleoside triphosphates as substrates. The sequence is that of DNA-directed RNA polymerase subunit beta from Ralstonia pickettii (strain 12J).